Here is a 389-residue protein sequence, read N- to C-terminus: Phospho-N-acetylmuramoyl-pentapeptide-transferase (389 aa).

10 consecutive transmembrane segments (helical) span residues 25–45 (RAVMATITALGIGLVCGPWVI), 73–93 (TMGGVLILIGIAVATLLWGDL), 97–117 (FIWIVMLVTFGFGVIGWVDDY), 135–155 (FWQSVIGLFAAVYLAFSVSEA), 190–210 (ISYPLGVWGFIVLTYFVIVGA), 222–242 (GLVIMPVVLVGASLGVFAYVM), 258–278 (GAGELLIFCSAMGGAGLAFLW), 286–306 (VFMGDVGALALGGALGTVAVI), 311–331 (IVLFIMGGIFVAETLSVMLQV), and 366–386 (QVVVRFWIITLMLCLFGLTTL).

The protein belongs to the glycosyltransferase 4 family. MraY subfamily. Requires Mg(2+) as cofactor.

It is found in the cell inner membrane. The catalysed reaction is UDP-N-acetyl-alpha-D-muramoyl-L-alanyl-gamma-D-glutamyl-meso-2,6-diaminopimeloyl-D-alanyl-D-alanine + di-trans,octa-cis-undecaprenyl phosphate = di-trans,octa-cis-undecaprenyl diphospho-N-acetyl-alpha-D-muramoyl-L-alanyl-D-glutamyl-meso-2,6-diaminopimeloyl-D-alanyl-D-alanine + UMP. Its pathway is cell wall biogenesis; peptidoglycan biosynthesis. Its function is as follows. Catalyzes the initial step of the lipid cycle reactions in the biosynthesis of the cell wall peptidoglycan: transfers peptidoglycan precursor phospho-MurNAc-pentapeptide from UDP-MurNAc-pentapeptide onto the lipid carrier undecaprenyl phosphate, yielding undecaprenyl-pyrophosphoryl-MurNAc-pentapeptide, known as lipid I. The polypeptide is Phospho-N-acetylmuramoyl-pentapeptide-transferase (Burkholderia cenocepacia (strain HI2424)).